The following is a 488-amino-acid chain: Cobyric acid synthase (488 aa).

The GATase cobBQ-type domain maps to 255–442 (ALKIAVPVLP…LHGLFGSDAY (188 aa)). Residue cysteine 337 is the Nucleophile of the active site. Residue histidine 434 is part of the active site.

Belongs to the CobB/CobQ family. CobQ subfamily.

It participates in cofactor biosynthesis; adenosylcobalamin biosynthesis. Its function is as follows. Catalyzes amidations at positions B, D, E, and G on adenosylcobyrinic A,C-diamide. NH(2) groups are provided by glutamine, and one molecule of ATP is hydrogenolyzed for each amidation. The polypeptide is Cobyric acid synthase (Rhizobium johnstonii (strain DSM 114642 / LMG 32736 / 3841) (Rhizobium leguminosarum bv. viciae)).